The sequence spans 499 residues: Putative hydrolase YuaR (499 aa).

The N-terminal stretch at 1-26 (MRVIMKPLRRTLVFFIFSVFLCGTVS) is a signal peptide. An AB hydrolase-1 domain is found at 94-393 (GSVIIISGGP…DAFPAVNFER (300 aa)). The active-site Nucleophile is the Ser207. Asp433 is a catalytic residue. His460 acts as the Proton donor in catalysis.

Belongs to the peptidase S33 family.

The chain is Putative hydrolase YuaR (yuaR) from Escherichia coli (strain K12).